Here is a 130-residue protein sequence, read N- to C-terminus: Tripartite terminase subunit 2 (130 aa).

The protein belongs to the herpesviridae TRM2 protein family. As to quaternary structure, associates with TRM1 and TRM3 to form the tripartite terminase complex.

It is found in the host nucleus. Functionally, component of the molecular motor that translocates viral genomic DNA in empty capsid during DNA packaging. Forms a tripartite terminase complex together with TRM1 and TRM3 in the host cytoplasm. Once the complex reaches the host nucleus, it interacts with the capsid portal vertex. This portal forms a ring in which genomic DNA is translocated into the capsid. This is Tripartite terminase subunit 2 from Homo sapiens (Human).